Reading from the N-terminus, the 56-residue chain is Large ribosomal subunit protein bL32 (56 aa).

A disordered region spans residues 1–35 (MAVQQNKSTRSKRGMRRSHHALRSVTISVDRTSGE). The segment covering 9–22 (TRSKRGMRRSHHAL) has biased composition (basic residues).

This sequence belongs to the bacterial ribosomal protein bL32 family.

The chain is Large ribosomal subunit protein bL32 from Blochmanniella pennsylvanica (strain BPEN).